The primary structure comprises 39 residues: Cygnin (39 aa).

Position 1 is a pyrrolidone carboxylic acid (glutamine 1). Cystine bridges form between cysteine 6–cysteine 33, cysteine 12–cysteine 28, and cysteine 16–cysteine 32.

It belongs to the transferrin family.

The sequence is that of Cygnin from Cygnus atratus (Black swan).